We begin with the raw amino-acid sequence, 688 residues long: Polyribonucleotide nucleotidyltransferase (688 aa).

The Mg(2+) site is built by aspartate 484 and aspartate 490. Positions 550 to 609 constitute a KH domain; it reads PTTEIFNVAPDKIIEIIGQGGRVIREIVEKFEVKIDLNKPSGEVKIMGNKERVLKTKEFI. In terms of domain architecture, S1 motif spans 626–688; sequence DEVLEAQVKR…NKGKIALDLA (63 aa).

The protein belongs to the polyribonucleotide nucleotidyltransferase family. It depends on Mg(2+) as a cofactor.

The protein localises to the cytoplasm. The enzyme catalyses RNA(n+1) + phosphate = RNA(n) + a ribonucleoside 5'-diphosphate. Its function is as follows. Involved in mRNA degradation. Catalyzes the phosphorolysis of single-stranded polyribonucleotides processively in the 3'- to 5'-direction. This Helicobacter acinonychis (strain Sheeba) protein is Polyribonucleotide nucleotidyltransferase.